The sequence spans 973 residues: EF-hand calcium-binding domain-containing protein 13 (973 aa).

Residues 384–448 (YSKNGINFKK…HSSLQKQVSS (65 aa)) form a disordered region. Over residues 396–405 (EKGEIHDSKS) the composition is skewed to basic and acidic residues. The segment covering 406–418 (KPQSLKSSTSLSK) has biased composition (low complexity). 6 consecutive EF-hand domains span residues 488–523 (LLDE…ERSF), 524–559 (PECN…FGIY), 633–668 (LKKD…MRDA), 756–791 (PKVN…LNVN), 792–827 (LTEE…SPHF), and 864–899 (TANA…ILTI).

The chain is EF-hand calcium-binding domain-containing protein 13 (EFCAB13) from Homo sapiens (Human).